A 276-amino-acid chain; its full sequence is Proteasome subunit beta type-8 (276 aa).

The tract at residues 1-33 (MALLDVCGAPRGQRPESALPVAGSGRRSDPGHY) is disordered. The propeptide at 1-72 (MALLDVCGAP…RNVQIEMAHG (72 aa)) is removed in mature form. Position 5 is a phosphothreonine (Asp5). Residue Thr73 is the Nucleophile of the active site.

The protein belongs to the peptidase T1B family. The 26S proteasome consists of a 20S proteasome core and two 19S regulatory subunits. The 20S proteasome core is composed of 28 subunits that are arranged in four stacked rings, resulting in a barrel-shaped structure. The two end rings are each formed by seven alpha subunits, and the two central rings are each formed by seven beta subunits. The catalytic chamber with the active sites is on the inside of the barrel. Component of the immunoproteasome, where it displaces the equivalent housekeeping subunit PSMB5. Component of the spermatoproteasome, a form of the proteasome specifically found in testis. Directly interacts with POMP. Interacts with TAP1. In terms of assembly, (Microbial infection) Interacts with HIV-1 TAT protein. In terms of processing, autocleaved. The resulting N-terminal Thr residue of the mature subunit is responsible for the nucleophile proteolytic activity.

It is found in the cytoplasm. Its subcellular location is the nucleus. It catalyses the reaction Cleavage of peptide bonds with very broad specificity.. The proteasome is a multicatalytic proteinase complex which is characterized by its ability to cleave peptides with Arg, Phe, Tyr, Leu, and Glu adjacent to the leaving group at neutral or slightly basic pH. The proteasome has an ATP-dependent proteolytic activity. This subunit is involved in antigen processing to generate class I binding peptides. Replacement of PSMB5 by PSMB8 increases the capacity of the immunoproteasome to cleave model peptides after hydrophobic and basic residues. Involved in the generation of spliced peptides resulting from the ligation of two separate proteasomal cleavage products that are not contiguous in the parental protein. Acts as a major component of interferon gamma-induced sensitivity. Plays a key role in apoptosis via the degradation of the apoptotic inhibitor MCL1. May be involved in the inflammatory response pathway. In cancer cells, substitution of isoform 1 (E2) by isoform 2 (E1) results in immunoproteasome deficiency. Required for the differentiation of preadipocytes into adipocytes. This is Proteasome subunit beta type-8 (PSMB8) from Homo sapiens (Human).